Reading from the N-terminus, the 93-residue chain is NAD(P)H-quinone oxidoreductase subunit 4L, chloroplastic (93 aa).

Helical transmembrane passes span 1-21 (MLEH…SGLI) and 60-80 (IFAI…LSIA).

This sequence belongs to the complex I subunit 4L family. As to quaternary structure, NDH is composed of at least 16 different subunits, 5 of which are encoded in the nucleus.

It localises to the plastid. The protein resides in the chloroplast thylakoid membrane. It carries out the reaction a plastoquinone + NADH + (n+1) H(+)(in) = a plastoquinol + NAD(+) + n H(+)(out). The catalysed reaction is a plastoquinone + NADPH + (n+1) H(+)(in) = a plastoquinol + NADP(+) + n H(+)(out). NDH shuttles electrons from NAD(P)H:plastoquinone, via FMN and iron-sulfur (Fe-S) centers, to quinones in the photosynthetic chain and possibly in a chloroplast respiratory chain. The immediate electron acceptor for the enzyme in this species is believed to be plastoquinone. Couples the redox reaction to proton translocation, and thus conserves the redox energy in a proton gradient. The protein is NAD(P)H-quinone oxidoreductase subunit 4L, chloroplastic of Anthoceros angustus (Hornwort).